Consider the following 542-residue polypeptide: Phosphoglucomutase (542 aa).

Residues Thr17, Arg21, 112–113, and Lys125 contribute to the substrate site; that span reads SH. Ser112 acts as the Phosphoserine intermediate in catalysis. Ser112 contacts Mg(2+). Positions 276, 278, and 280 each coordinate Mg(2+). Substrate is bound by residues 280 to 281, Thr343, 362 to 364, Lys375, and Arg495; these read DR and EES.

It belongs to the phosphohexose mutase family. Requires Mg(2+) as cofactor.

The enzyme catalyses alpha-D-glucose 1-phosphate = alpha-D-glucose 6-phosphate. Functionally, this enzyme participates in both the breakdown and synthesis of glucose. Required for the synthesis of capsular polysaccharide and normal lipopolysaccharide. In Rhizobium radiobacter (Agrobacterium tumefaciens), this protein is Phosphoglucomutase (pgm).